The chain runs to 143 residues: Large ribosomal subunit protein uL11 (143 aa).

It belongs to the universal ribosomal protein uL11 family. In terms of assembly, part of the ribosomal stalk of the 50S ribosomal subunit. Interacts with L10 and the large rRNA to form the base of the stalk. L10 forms an elongated spine to which L12 dimers bind in a sequential fashion forming a multimeric L10(L12)X complex. In terms of processing, one or more lysine residues are methylated.

Its function is as follows. Forms part of the ribosomal stalk which helps the ribosome interact with GTP-bound translation factors. The protein is Large ribosomal subunit protein uL11 of Halorhodospira halophila (strain DSM 244 / SL1) (Ectothiorhodospira halophila (strain DSM 244 / SL1)).